The following is a 421-amino-acid chain: 4-hydroxy-3-methylbut-2-en-1-yl diphosphate synthase (flavodoxin) (421 aa).

[4Fe-4S] cluster contacts are provided by Cys311, Cys314, Cys357, and Glu364.

The protein belongs to the IspG family. [4Fe-4S] cluster serves as cofactor.

It catalyses the reaction (2E)-4-hydroxy-3-methylbut-2-enyl diphosphate + oxidized [flavodoxin] + H2O + 2 H(+) = 2-C-methyl-D-erythritol 2,4-cyclic diphosphate + reduced [flavodoxin]. It participates in isoprenoid biosynthesis; isopentenyl diphosphate biosynthesis via DXP pathway; isopentenyl diphosphate from 1-deoxy-D-xylulose 5-phosphate: step 5/6. Its function is as follows. Converts 2C-methyl-D-erythritol 2,4-cyclodiphosphate (ME-2,4cPP) into 1-hydroxy-2-methyl-2-(E)-butenyl 4-diphosphate. The polypeptide is 4-hydroxy-3-methylbut-2-en-1-yl diphosphate synthase (flavodoxin) (Xanthomonas campestris pv. campestris (strain 8004)).